The following is a 258-amino-acid chain: ADP-dependent (S)-NAD(P)H-hydrate dehydratase (258 aa).

Positions M1 to R258 constitute a YjeF C-terminal domain. AMP is bound at residue G201. D202 is a binding site for (6S)-NADPHX.

Belongs to the NnrD/CARKD family. Homotetramer. Requires Mg(2+) as cofactor.

It carries out the reaction (6S)-NADHX + ADP = AMP + phosphate + NADH + H(+). The catalysed reaction is (6S)-NADPHX + ADP = AMP + phosphate + NADPH + H(+). Functionally, catalyzes the dehydration of the S-form of NAD(P)HX at the expense of ADP, which is converted to AMP. Together with NAD(P)HX epimerase, which catalyzes the epimerization of the S- and R-forms, the enzyme allows the repair of both epimers of NAD(P)HX, a damaged form of NAD(P)H that is a result of enzymatic or heat-dependent hydration. The polypeptide is ADP-dependent (S)-NAD(P)H-hydrate dehydratase (Natrialba magadii (strain ATCC 43099 / DSM 3394 / CCM 3739 / CIP 104546 / IAM 13178 / JCM 8861 / NBRC 102185 / NCIMB 2190 / MS3) (Natronobacterium magadii)).